Here is a 107-residue protein sequence, read N- to C-terminus: Cell cycle protein GpsB (107 aa).

Residues 32-65 (LDNVIQDYETYISEIEELKAEIERLKNQNTHPKS) adopt a coiled-coil conformation. Residues 57-80 (KNQNTHPKSPSTENRHAMVQPTRV) form a disordered region. Polar residues predominate over residues 58–68 (NQNTHPKSPST).

The protein belongs to the GpsB family. Forms polymers through the coiled coil domains. Interacts with PBP1, MreC and EzrA.

It is found in the cytoplasm. Its function is as follows. Divisome component that associates with the complex late in its assembly, after the Z-ring is formed, and is dependent on DivIC and PBP2B for its recruitment to the divisome. Together with EzrA, is a key component of the system that regulates PBP1 localization during cell cycle progression. Its main role could be the removal of PBP1 from the cell pole after pole maturation is completed. Also contributes to the recruitment of PBP1 to the division complex. Not essential for septum formation. The sequence is that of Cell cycle protein GpsB from Streptococcus uberis (strain ATCC BAA-854 / 0140J).